The sequence spans 121 residues: MALNIENIIAEIKEASILELNDLVKAIEEEFGVTAAAPVAAAAAGGAEEAAKDSFDVELTSAGDKKVGVIKAVREITGLGLKEAKGLVDGAPANVKEGVAAAEAEEIKAKLEEAGATITLK.

This sequence belongs to the bacterial ribosomal protein bL12 family. As to quaternary structure, homodimer. Part of the ribosomal stalk of the 50S ribosomal subunit. Forms a multimeric L10(L12)X complex, where L10 forms an elongated spine to which 2 to 4 L12 dimers bind in a sequential fashion. Binds GTP-bound translation factors.

Functionally, forms part of the ribosomal stalk which helps the ribosome interact with GTP-bound translation factors. Is thus essential for accurate translation. This chain is Large ribosomal subunit protein bL12, found in Streptococcus pyogenes serotype M3 (strain ATCC BAA-595 / MGAS315).